Here is a 268-residue protein sequence, read N- to C-terminus: Taurine import ATP-binding protein TauB (268 aa).

Residues 4-236 (LSIENISMRF…MGVNADLREV (233 aa)) enclose the ABC transporter domain. 41–48 (GPSGCGKT) lines the ATP pocket.

It belongs to the ABC transporter superfamily. Taurine importer (TC 3.A.1.17.1) family. In terms of assembly, the complex is composed of two ATP-binding proteins (TauB), two transmembrane proteins (TauC) and a solute-binding protein (TauA).

It localises to the cell inner membrane. It catalyses the reaction taurine(out) + ATP + H2O = taurine(in) + ADP + phosphate + H(+). Functionally, part of the ABC transporter complex TauABC involved in taurine import. Responsible for energy coupling to the transport system. This Ruegeria pomeroyi (strain ATCC 700808 / DSM 15171 / DSS-3) (Silicibacter pomeroyi) protein is Taurine import ATP-binding protein TauB.